The primary structure comprises 576 residues: Mycobactin import ATP-binding/permease protein IrtB (576 aa).

The Cytoplasmic segment spans residues 1–25; sequence MIRTLIALVPADKRGTLGLYTVLTV. The region spanning 19–299 is the ABC transmembrane type-1 domain; it reads LYTVLTVLSV…LSELTPAIES (281 aa). Residues 26-46 form a helical membrane-spanning segment; that stretch reads LSVVIRAAGTVLLVPLVAALF. At 47–52 the chain is on the periplasmic side; the sequence is GDTPQD. A helical membrane pass occupies residues 53–73; it reads AWPWLGWLTAATAAGWIVDTT. The Cytoplasmic segment spans residues 74 to 131; it reads TSRLGFDLGFAVLDHTQHDVADRMPNIRLDWLTAENTATARAAIASTGPELVGLVVNL. The next 2 helical transmembrane spans lie at 132–152 and 153–173; these read LTPL…LVAV and SPPL…AMWA. Topologically, residues 174–241 are cytoplasmic; it reads SNRLSRKADT…RLLAMQIPGQ (68 aa). Residues 242 to 262 traverse the membrane as a helical segment; that stretch reads LLFSLASQLALILLAGMATWL. Residues 263 to 267 are Periplasmic-facing; the sequence is TVRGE. The chain crosses the membrane as a helical span at residues 268-288; it reads LSVPEAVAMIVVVARYLEPFT. At 289-576 the chain is on the cytoplasmic side; sequence SLSELTPAIE…HEAADWQITH (288 aa). Residues 332 to 565 enclose the ABC transporter domain; that stretch reads IEFDCVTFGY…GGRFDEFWRR (234 aa). 364-371 lines the ATP pocket; sequence GPSGSGKS.

The protein belongs to the ABC transporter superfamily. Siderophore-Fe(3+) uptake transporter (SIUT) (TC 3.A.1.21) family. As to quaternary structure, forms a heterodimer with IrtA.

It is found in the cell inner membrane. In terms of biological role, part of the ABC transporter complex IrtAB involved in the import of iron-bound mycobactin (Fe-MBT) and carboxymycobactin (Fe-cMBT). Has a preference for Fe-MBT over Fe-cMBT. Transmembrane domains (TMD) form a pore in the membrane and the ATP-binding domain (NBD) is responsible for energy generation. This is Mycobactin import ATP-binding/permease protein IrtB from Mycolicibacterium smegmatis (strain ATCC 700084 / mc(2)155) (Mycobacterium smegmatis).